A 364-amino-acid polypeptide reads, in one-letter code: Heat-inducible transcription repressor HrcA (364 aa).

This sequence belongs to the HrcA family.

Negative regulator of class I heat shock genes (grpE-dnaK-dnaJ and groELS operons). Prevents heat-shock induction of these operons. The polypeptide is Heat-inducible transcription repressor HrcA (Cyanothece sp. (strain PCC 7425 / ATCC 29141)).